Reading from the N-terminus, the 156-residue chain is ATP synthase subunit b (156 aa).

The chain crosses the membrane as a helical span at residues 12-32 (VAFLIFVLFCMKYVWPPVITA).

The protein belongs to the ATPase B chain family. As to quaternary structure, F-type ATPases have 2 components, F(1) - the catalytic core - and F(0) - the membrane proton channel. F(1) has five subunits: alpha(3), beta(3), gamma(1), delta(1), epsilon(1). F(0) has three main subunits: a(1), b(2) and c(10-14). The alpha and beta chains form an alternating ring which encloses part of the gamma chain. F(1) is attached to F(0) by a central stalk formed by the gamma and epsilon chains, while a peripheral stalk is formed by the delta and b chains.

It localises to the cell inner membrane. In terms of biological role, f(1)F(0) ATP synthase produces ATP from ADP in the presence of a proton or sodium gradient. F-type ATPases consist of two structural domains, F(1) containing the extramembraneous catalytic core and F(0) containing the membrane proton channel, linked together by a central stalk and a peripheral stalk. During catalysis, ATP synthesis in the catalytic domain of F(1) is coupled via a rotary mechanism of the central stalk subunits to proton translocation. Functionally, component of the F(0) channel, it forms part of the peripheral stalk, linking F(1) to F(0). The chain is ATP synthase subunit b from Pseudomonas putida (strain ATCC 700007 / DSM 6899 / JCM 31910 / BCRC 17059 / LMG 24140 / F1).